Consider the following 25-residue polypeptide: Snake venom metalloproteinase catroxase (25 aa).

E9 provides a ligand contact to Ca(2+).

Belongs to the venom metalloproteinase (M12B) family. As to quaternary structure, monomer. Zn(2+) is required as a cofactor. In terms of tissue distribution, expressed by the venom gland.

It localises to the secreted. With respect to regulation, inhibited by EDTA, beta-mercaptoethanol, but not by PMSF, p-tosyl-L-phenylalanine chloromethyl ketone, p-tosyl-L-lysine chloromethyl ketone, soybean trypsin inhibitor and aprotinin. Its function is as follows. Metalloprotease that is highly active against alpha-(FGA) and beta-chains (FGB) of fibrinogen molecules. The chain is Snake venom metalloproteinase catroxase from Crotalus atrox (Western diamondback rattlesnake).